Consider the following 436-residue polypeptide: Trigger factor (436 aa).

In terms of domain architecture, PPIase FKBP-type spans 163–248 (GDQVIIDFVG…VHSVQTKVLP (86 aa)).

It belongs to the FKBP-type PPIase family. Tig subfamily.

It is found in the cytoplasm. It catalyses the reaction [protein]-peptidylproline (omega=180) = [protein]-peptidylproline (omega=0). Involved in protein export. Acts as a chaperone by maintaining the newly synthesized protein in an open conformation. Functions as a peptidyl-prolyl cis-trans isomerase. In Hydrogenovibrio crunogenus (strain DSM 25203 / XCL-2) (Thiomicrospira crunogena), this protein is Trigger factor.